A 182-amino-acid polypeptide reads, in one-letter code: Succinate dehydrogenase [ubiquinone] cytochrome b small subunit, mitochondrial (182 aa).

Over 1–71 (MSLSLLLRGA…SAPRMASAGS (71 aa)) the chain is Mitochondrial matrix. A helical membrane pass occupies residues 72–96 (SHTLLWTVERIVSAGLLAVIPAAFI). Over 97–101 (APSQV) the chain is Mitochondrial intermembrane. The chain crosses the membrane as a helical span at residues 102–122 (LDALMAISVVIHTHWGVEAMV). Position 113 (His113) interacts with heme. Residues 123 to 135 (VDYMRPSVVGNVL) are Mitochondrial matrix-facing. Tyr125 is an a ubiquinone binding site. Residues 136–157 (PKVAHIALIIISVATLGGLFYF) traverse the membrane as a helical segment. Residues 158 to 182 (IQNDVGLANGIKRFWAIKGKDAEKA) lie on the Mitochondrial intermembrane side of the membrane.

This sequence belongs to the CybS family. Forms part of complex II containing four subunits: a flavoprotein (FP), an iron-sulfur protein (IP) and a cytochrome b composed of a large and a small subunit.

It is found in the mitochondrion inner membrane. It participates in carbohydrate metabolism; tricarboxylic acid cycle. Functionally, membrane-anchoring subunit of succinate dehydrogenase (SDH) that is involved in complex II of the mitochondrial electron transport chain and is responsible for transferring electrons from succinate to ubiquinone (coenzyme Q). This is Succinate dehydrogenase [ubiquinone] cytochrome b small subunit, mitochondrial from Drosophila melanogaster (Fruit fly).